A 475-amino-acid polypeptide reads, in one-letter code: NADP-dependent glyceraldehyde-3-phosphate dehydrogenase (475 aa).

Arg-103 contacts substrate. An NADP(+)-binding site is contributed by Ser-151. 154 to 155 (NY) is a binding site for substrate. Residues Lys-177, Thr-180, Asp-215, and 230–251 (GSTGIGERIGKMAGMRPIMLEL) each bind NADP(+). Residues Glu-250 and Cys-284 contribute to the active site. 283–285 (RCT) is a binding site for substrate. Residue Glu-377 coordinates NADP(+). Position 437 (Arg-437) interacts with substrate.

Belongs to the aldehyde dehydrogenase family. Homotetramer.

It carries out the reaction D-glyceraldehyde 3-phosphate + NADP(+) + H2O = (2R)-3-phosphoglycerate + NADPH + 2 H(+). This Streptococcus mutans serotype c (strain ATCC 700610 / UA159) protein is NADP-dependent glyceraldehyde-3-phosphate dehydrogenase (gapN).